Here is a 60-residue protein sequence, read N- to C-terminus: 5-hydroxytryptamine receptor 2B (60 aa).

At 1–4 (VLCP) the chain is on the extracellular side. Residues 5 to 26 (AWLFLDVLFSTASIMHLCAISV) traverse the membrane as a helical segment. Ergotamine contacts are provided by aspartate 10 and threonine 15. Positions 27–29 (DRY) match the DRY motif; important for ligand-induced conformation changes motif. Residues 27 to 46 (DRYIAIKKPIQANQYNSRAT) lie on the Cytoplasmic side of the membrane. A helical membrane pass occupies residues 47–60 (AFIKITVVWLISIG).

Belongs to the G-protein coupled receptor 1 family. Interacts (via C-terminus) with MPDZ. Detected in aorta, renal artery, jugular vein, vena cava and femoral vein.

Its subcellular location is the cell membrane. It is found in the synapse. It localises to the synaptosome. Its function is as follows. G-protein coupled receptor for 5-hydroxytryptamine (serotonin). Also functions as a receptor for various ergot alkaloid derivatives and psychoactive substances. Ligand binding causes a conformation change that triggers signaling via guanine nucleotide-binding proteins (G proteins) and modulates the activity of downstream effectors. HTR2B is coupled to G(q)/G(11) G alpha proteins and activates phospholipase C-beta, releasing diacylglycerol (DAG) and inositol 1,4,5-trisphosphate (IP3) second messengers that modulate the activity of phosphatidylinositol 3-kinase and promote the release of Ca(2+) ions from intracellular stores, respectively. Beta-arrestin family members inhibit signaling via G proteins and mediate activation of alternative signaling pathways. Plays a role in the regulation of dopamine and 5-hydroxytryptamine release, 5-hydroxytryptamine uptake and in the regulation of extracellular dopamine and 5-hydroxytryptamine levels, and thereby affects neural activity. May play a role in the perception of pain. Plays a role in the regulation of behavior, including impulsive behavior. Required for normal proliferation of embryonic cardiac myocytes and normal heart development. Protects cardiomyocytes against apoptosis. Plays a role in the adaptation of pulmonary arteries to chronic hypoxia. Plays a role in vasoconstriction. Required for normal osteoblast function and proliferation, and for maintaining normal bone density. Required for normal proliferation of the interstitial cells of Cajal in the intestine. This is 5-hydroxytryptamine receptor 2B (HTR2B) from Sus scrofa (Pig).